The chain runs to 292 residues: Pyridoxal 5'-phosphate synthase subunit PdxS (292 aa).

D22 contributes to the D-ribose 5-phosphate binding site. Catalysis depends on K79, which acts as the Schiff-base intermediate with D-ribose 5-phosphate. G151 is a D-ribose 5-phosphate binding site. R163 contacts D-glyceraldehyde 3-phosphate. D-ribose 5-phosphate contacts are provided by residues G212 and 233-234 (GS).

This sequence belongs to the PdxS/SNZ family. In the presence of PdxT, forms a dodecamer of heterodimers.

It catalyses the reaction aldehydo-D-ribose 5-phosphate + D-glyceraldehyde 3-phosphate + L-glutamine = pyridoxal 5'-phosphate + L-glutamate + phosphate + 3 H2O + H(+). It participates in cofactor biosynthesis; pyridoxal 5'-phosphate biosynthesis. Its function is as follows. Catalyzes the formation of pyridoxal 5'-phosphate from ribose 5-phosphate (RBP), glyceraldehyde 3-phosphate (G3P) and ammonia. The ammonia is provided by the PdxT subunit. Can also use ribulose 5-phosphate and dihydroxyacetone phosphate as substrates, resulting from enzyme-catalyzed isomerization of RBP and G3P, respectively. The chain is Pyridoxal 5'-phosphate synthase subunit PdxS from Thermoanaerobacter sp. (strain X514).